We begin with the raw amino-acid sequence, 592 residues long: MGEDQRNLFIALGLILVILTGYQMFVMGPAEEERRAEQAAVEASQELADPDLPASALEPAAATTVDRETALGGNQRVTIDAPSVLGSLSLTGARLDDVRLRRHTETIDDDTPVALLNPIGSDHVFYARDGWTSATSGFTDLPGGSTEWTLASGSTLTPDTPITLTYDSPSGLHFERVISVDDNYLFTLTDTVTNNSGQEVELSRYGLVRHEGRPEDETRNMAVFEGALAVIDGAMVRSSFGKLEDGNQTEESGTGGWVGITQRYWMAAAVPDQDRPFTARFRTIERGEIDAFEASYVEQAIAVPAGESLASTTRIFAGAKELGVLQQVQNEVGIERFDMAINWGWLWFLTRPFVWLLTMLEGALGQFGLAILALTLMVKIVMFPLANRAYASMAKMKAVQPKMAEIKERYGADQQKQQQALMELYKTEKINPLAGCLPILPQIPIFFALYQTLFNAIEMRHAPFFGWIRDLSAADPTNIWNLFGLIPYDPTGIWLIGGVLGIGAWPIIMGLTMAAQQALNPPPPDPMQARIFAFLPIVFTFILAPFAAGLVIYWAWNNFLSVLQQYIIMRRHGNETQVDKLVARLLKRDRGD.

The next 5 helical transmembrane spans lie at 8–28 (LFIA…FVMG), 363–385 (ALGQ…MFPL), 430–450 (INPL…FALY), 493–513 (IWLI…GLTM), and 531–551 (IFAF…AGLV).

The protein belongs to the OXA1/ALB3/YidC family. Type 1 subfamily. As to quaternary structure, interacts with the Sec translocase complex via SecD. Specifically interacts with transmembrane segments of nascent integral membrane proteins during membrane integration.

Its subcellular location is the cell inner membrane. Required for the insertion and/or proper folding and/or complex formation of integral membrane proteins into the membrane. Involved in integration of membrane proteins that insert both dependently and independently of the Sec translocase complex, as well as at least some lipoproteins. Aids folding of multispanning membrane proteins. This Maricaulis maris (strain MCS10) (Caulobacter maris) protein is Membrane protein insertase YidC.